Reading from the N-terminus, the 189-residue chain is MRKIGIIGGTFDPPHYGHLLIANEVYHALNLEEVWFLPNQIPPHKQGRNITSVESRLQMLELATEAEEHFSICLEELSRKGPSYTYDTMLQLTKKYPDVQFHFIIGGDMVEYLPKWYNIEALLDLVTFVGVARPGYKLRTPYPITTVEIPEFAVSSSLLRERYKEKKTCKYLLPEKVQVYIERNGLYES.

This sequence belongs to the NadD family.

The enzyme catalyses nicotinate beta-D-ribonucleotide + ATP + H(+) = deamido-NAD(+) + diphosphate. The protein operates within cofactor biosynthesis; NAD(+) biosynthesis; deamido-NAD(+) from nicotinate D-ribonucleotide: step 1/1. Functionally, catalyzes the reversible adenylation of nicotinate mononucleotide (NaMN) to nicotinic acid adenine dinucleotide (NaAD). In Bacillus anthracis (strain CDC 684 / NRRL 3495), this protein is Probable nicotinate-nucleotide adenylyltransferase.